The chain runs to 41 residues: U-megalopygitoxin(4)-Mo5 (41 aa).

The first 23 residues, 1–23 (MKCSLLLVVFAAMVALFAAGTNA), serve as a signal peptide directing secretion.

Belongs to the caterpillar 4 family. Expressed by the venom apparatus.

The protein localises to the secreted. Probable toxin. The protein is U-megalopygitoxin(4)-Mo5 of Megalopyge opercularis (Southern flannel moth).